Consider the following 298-residue polypeptide: Spermidine synthase (298 aa).

In terms of domain architecture, PABS spans 13 to 248; sequence DGWFREINNM…GSIGFVVASK (236 aa). Gln44 is a binding site for S-adenosyl 3-(methylsulfanyl)propylamine. Residue Tyr74 coordinates putrescine. S-adenosyl 3-(methylsulfanyl)propylamine-binding positions include Gln75, Asp99, Asp119, 150–151, and Asp168; that span reads DG. Asp168 (proton acceptor) is an active-site residue. Residues 168-171 and Tyr236 each bind putrescine; that span reads DSSD.

This sequence belongs to the spermidine/spermine synthase family.

It carries out the reaction S-adenosyl 3-(methylsulfanyl)propylamine + putrescine = S-methyl-5'-thioadenosine + spermidine + H(+). It participates in amine and polyamine biosynthesis; spermidine biosynthesis; spermidine from putrescine: step 1/1. The polypeptide is Spermidine synthase (Schizosaccharomyces pombe (strain 972 / ATCC 24843) (Fission yeast)).